A 307-amino-acid chain; its full sequence is Ribosomal RNA small subunit methyltransferase H (307 aa).

S-adenosyl-L-methionine is bound by residues 32–34 (GGH), Asp52, Phe78, Asp99, and Gln106.

It belongs to the methyltransferase superfamily. RsmH family.

It localises to the cytoplasm. It carries out the reaction cytidine(1402) in 16S rRNA + S-adenosyl-L-methionine = N(4)-methylcytidine(1402) in 16S rRNA + S-adenosyl-L-homocysteine + H(+). Specifically methylates the N4 position of cytidine in position 1402 (C1402) of 16S rRNA. The chain is Ribosomal RNA small subunit methyltransferase H from Acinetobacter baumannii (strain AB307-0294).